Reading from the N-terminus, the 505-residue chain is Probable alpha-L-arabinofuranosidase C (505 aa).

N-linked (GlcNAc...) asparagine glycans are attached at residues Asn-81, Asn-152, Asn-269, and Asn-438.

Belongs to the glycosyl hydrolase 51 family.

Its subcellular location is the secreted. It catalyses the reaction Hydrolysis of terminal non-reducing alpha-L-arabinofuranoside residues in alpha-L-arabinosides.. It functions in the pathway glycan metabolism; L-arabinan degradation. In terms of biological role, alpha-L-arabinofuranosidase involved in the degradation of arabinoxylan, a major component of plant hemicellulose. Acts only on small linear 1,5-alpha-linked L-arabinofuranosyl oligosaccharides. This Aspergillus fumigatus (strain ATCC MYA-4609 / CBS 101355 / FGSC A1100 / Af293) (Neosartorya fumigata) protein is Probable alpha-L-arabinofuranosidase C (abfC).